The primary structure comprises 284 residues: MKVFILALLALTATTAIAQLETTCSQGFRQYQQQQQPGQRQLLEQMRPCVAFLQQQCRPLRMPFLQTQVEQLSSCQIVQYQCCQQLAQIPEQIRCHAIHNVVEAIMQQQSQQQRQERQQQAQHKSMRMLLETLYLMCNIYVPIQCQQQQQLGQQQQQQLQEQLTPCATFLQHQCSPVTVPFPQIPVDQPTSCQNVQHQCCRQLSQIPEQFRCQAIHNVAEAIRQQQPQQQWQGMYQPQQPAQLESIRMSLQALRSMCSIYIPVQCPAPTAYNIPMVATYTGGAC.

Positions 1–18 are cleaved as a signal peptide; sequence MKVFILALLALTATTAIA.

This sequence belongs to the prolamin family. In terms of processing, contains disulfide bonds. As to expression, expressed only in developing endosperms. Not detected in roots, stems or leaves.

Seed storage protein. Might be integrated via inter-chain disulfide bonds within the glutenin polymer. The polypeptide is Avenin-like b5 (Triticum aestivum (Wheat)).